The chain runs to 316 residues: GTP cyclohydrolase FolE2 1 (316 aa).

Belongs to the GTP cyclohydrolase IV family.

The catalysed reaction is GTP + H2O = 7,8-dihydroneopterin 3'-triphosphate + formate + H(+). It participates in cofactor biosynthesis; 7,8-dihydroneopterin triphosphate biosynthesis; 7,8-dihydroneopterin triphosphate from GTP: step 1/1. Converts GTP to 7,8-dihydroneopterin triphosphate. The protein is GTP cyclohydrolase FolE2 1 of Burkholderia orbicola (strain AU 1054).